The following is a 118-amino-acid chain: MLEFAPICIYLVISLLVSLILLGVPFLFASNSSTYPEKLSAYECGFDPFGDARSRFDIRFYLVSILFIIFDLEVTFFFPWAVSLNKIDLFGFWSMMAFLLILTIGFLYEWKRGALDWE.

3 helical membrane-spanning segments follow: residues 9 to 29 (IYLVISLLVSLILLGVPFLFA), 62 to 82 (LVSILFIIFDLEVTFFFPWAV), and 87 to 107 (IDLFGFWSMMAFLLILTIGFL).

Belongs to the complex I subunit 3 family.

It is found in the mitochondrion membrane. It carries out the reaction a ubiquinone + NADH + 5 H(+)(in) = a ubiquinol + NAD(+) + 4 H(+)(out). Its function is as follows. Core subunit of the mitochondrial membrane respiratory chain NADH dehydrogenase (Complex I) that is believed to belong to the minimal assembly required for catalysis. Complex I functions in the transfer of electrons from NADH to the respiratory chain. The immediate electron acceptor for the enzyme is believed to be ubiquinone. This Triticum aestivum (Wheat) protein is NADH-ubiquinone oxidoreductase chain 3 (ND3).